Reading from the N-terminus, the 155-residue chain is Cytochrome c-type biogenesis protein CcmE (155 aa).

Topologically, residues 1–7 (MTRKQKR) are cytoplasmic. The chain crosses the membrane as a helical; Signal-anchor for type II membrane protein span at residues 8 to 28 (LVVIAGGMSFILAAVLLVMFA). Topologically, residues 29–155 (FSQSVAYFYM…GKGQEAKATP (127 aa)) are periplasmic. Heme is bound by residues histidine 124 and tyrosine 128.

Belongs to the CcmE/CycJ family.

It is found in the cell inner membrane. Functionally, heme chaperone required for the biogenesis of c-type cytochromes. Transiently binds heme delivered by CcmC and transfers the heme to apo-cytochromes in a process facilitated by CcmF and CcmH. The protein is Cytochrome c-type biogenesis protein CcmE of Rhizobium etli (strain ATCC 51251 / DSM 11541 / JCM 21823 / NBRC 15573 / CFN 42).